Here is a 451-residue protein sequence, read N- to C-terminus: Histidinol dehydrogenase (451 aa).

The interval 1–20 (MLNVTDLRGHTPSKSDIRRA) is disordered. The span at 7–19 (LRGHTPSKSDIRR) shows a compositional bias: basic and acidic residues. Residues Y129, Q193, and N218 each contribute to the NAD(+) site. Substrate contacts are provided by T241, Q263, and H266. Zn(2+) is bound by residues Q263 and H266. Active-site proton acceptor residues include E332 and H333. Residues H333, D366, E420, and H425 each contribute to the substrate site. D366 serves as a coordination point for Zn(2+). Residue H425 participates in Zn(2+) binding.

The protein belongs to the histidinol dehydrogenase family. It depends on Zn(2+) as a cofactor.

It catalyses the reaction L-histidinol + 2 NAD(+) + H2O = L-histidine + 2 NADH + 3 H(+). It participates in amino-acid biosynthesis; L-histidine biosynthesis; L-histidine from 5-phospho-alpha-D-ribose 1-diphosphate: step 9/9. Catalyzes the sequential NAD-dependent oxidations of L-histidinol to L-histidinaldehyde and then to L-histidine. The polypeptide is Histidinol dehydrogenase (Corynebacterium efficiens (strain DSM 44549 / YS-314 / AJ 12310 / JCM 11189 / NBRC 100395)).